We begin with the raw amino-acid sequence, 846 residues long: Disrupted in schizophrenia 1 homolog (846 aa).

Disordered regions lie at residues 1-53 (MQGA…IGFL), 127-147 (HSGV…GDSG), 231-257 (EAEP…GEPR), 277-312 (TRSN…QDGG), and 409-436 (LHGA…AQDS). The segment at 1–288 (MQGAGSRGAW…SNRQPECGMV (288 aa)) is interaction with MAP1A. 2 stretches are compositionally biased toward basic and acidic residues: residues 133-143 (GNDRRQSERLT) and 248-257 (GSDRPHGEPR). The span at 277 to 300 (TRSNRQPECGMVSSSDAGFSSQDA) shows a compositional bias: polar residues. The interaction with TRAF3IP1 stretch occupies residues 289–686 (SSSDAGFSSQ…LERVWKADLE (398 aa)). Residues 429–587 (RRTTAQDSLP…LLEAKMLALS (159 aa)) form a required for localization to punctate cytoplasmic foci region. Residues 435 to 846 (DSLPGLAVTR…STAGAQEAED (412 aa)) are necessary and sufficient for interaction with PCNT and localization at the centrosome. Residues 440–489 (LAVTRRDWLMREKEQLQKEIEALRARVSVLEAKEQRLSQELEDQEMLLRW) are a coiled coil. Positions 588–846 (GSCFSTAKEL…STAGAQEAED (259 aa)) are interaction with ATF4 and ATF5. Residues 721 to 846 (TAALAVPRTP…STAGAQEAED (126 aa)) are interaction with NDEL1 and PAFAH1B1. The tract at residues 721–846 (TAALAVPRTP…STAGAQEAED (126 aa)) is interaction with PAFAH1B1. The interval 795–828 (GHDEALFQSLQGELQMVKETLQTMFLQLQPAKEA) is interaction with NDEL1.

In terms of assembly, interacts with NDEL1. Interacts with CCDC88A (via C-terminus); the interaction is direct. Interacts with GSK3B. Interacts with tubulin alpha, ACTN2, ANKHD1, ATF4, ATF5, CEP63, EIF3S3, MAP1A, NDEL1, PAFAH1B1, RANBP9, SPTBN4, SYNE1 and TRAF3IP1. Interaction with microtubules may be mediated in part by TRAF3IP1. Interacts (via C-terminal) with PCNT. Interacts with CHCHD6. Interacts with CCDC141. Interacts with FBXW7, the substrate-recognition component of a SCF (SKP1-CUL1-F-box protein) E3 ubiquitin-protein ligase complex; the interaction targets DISC1 for proteasomal degradation. Interacts with ZNF365. Interacts with ATF4; inhibiting ATF4 transcription factor activity by disrupting ATF4 dimerization and DNA-binding. Interacts with PDE4B. Post-translationally, ubiquitinated. Ubiquitination with 'Lys-48'-linked polyubiquitin chains leads to its proteasomal degradation. As to expression, expressed in brain, heart, kidney, liver and thymus. Within the brain expression is high in the cerebral cortex, hippocampus and olfactory bulb and is also seen at lower levels in the cerebellum (at protein level).

The protein localises to the cytoplasm. The protein resides in the cytoskeleton. It localises to the mitochondrion. Its subcellular location is the microtubule organizing center. It is found in the centrosome. The protein localises to the postsynaptic density. In terms of biological role, involved in the regulation of multiple aspects of embryonic and adult neurogenesis. Required for neural progenitor proliferation in the ventrical/subventrical zone during embryonic brain development and in the adult dentate gyrus of the hippocampus. Participates in the Wnt-mediated neural progenitor proliferation as a positive regulator by modulating GSK3B activity and CTNNB1 abundance. Plays a role as a modulator of the AKT-mTOR signaling pathway controlling the tempo of the process of newborn neurons integration during adult neurogenesis, including neuron positioning, dendritic development and synapse formation. Inhibits the activation of AKT-mTOR signaling upon interaction with CCDC88A. Regulates the migration of early-born granule cell precursors toward the dentate gyrus during the hippocampal development. Inhibits ATF4 transcription factor activity in neurons by disrupting ATF4 dimerization and DNA-binding. Plays a role, together with PCNT, in the microtubule network formation. This is Disrupted in schizophrenia 1 homolog from Rattus norvegicus (Rat).